Here is a 237-residue protein sequence, read N- to C-terminus: Protein GrpE (237 aa).

Disordered regions lie at residues 1-52 and 200-237; these read MSGD…RLQQ and KVSMGPGPQSGASPSSAQPNDDSTATFQGEADPAQPGV. The segment covering 27–40 has biased composition (polar residues); that stretch reads ASINSDEGQSSAQS. Low complexity predominate over residues 204–218; it reads GPGPQSGASPSSAQP.

Belongs to the GrpE family. In terms of assembly, homodimer.

The protein resides in the cytoplasm. Participates actively in the response to hyperosmotic and heat shock by preventing the aggregation of stress-denatured proteins, in association with DnaK and GrpE. It is the nucleotide exchange factor for DnaK and may function as a thermosensor. Unfolded proteins bind initially to DnaJ; upon interaction with the DnaJ-bound protein, DnaK hydrolyzes its bound ATP, resulting in the formation of a stable complex. GrpE releases ADP from DnaK; ATP binding to DnaK triggers the release of the substrate protein, thus completing the reaction cycle. Several rounds of ATP-dependent interactions between DnaJ, DnaK and GrpE are required for fully efficient folding. In Prochlorococcus marinus (strain MIT 9313), this protein is Protein GrpE.